We begin with the raw amino-acid sequence, 132 residues long: Small ribosomal subunit protein uS8 (132 aa).

Belongs to the universal ribosomal protein uS8 family. In terms of assembly, part of the 30S ribosomal subunit. Contacts proteins S5 and S12.

In terms of biological role, one of the primary rRNA binding proteins, it binds directly to 16S rRNA central domain where it helps coordinate assembly of the platform of the 30S subunit. The sequence is that of Small ribosomal subunit protein uS8 from Sinorhizobium fredii (strain NBRC 101917 / NGR234).